The chain runs to 29 residues: Cyclotide mela-2 (29 aa).

The cyclopeptide (Gly-Asp) cross-link spans 1-29; sequence GKPTCGETCFKGKCYTPGCTCSYPLCKKD. Intrachain disulfides connect Cys5–Cys19, Cys9–Cys21, and Cys14–Cys26.

In terms of processing, this is a cyclic peptide. Post-translationally, contains 3 disulfide bonds.

Functionally, probably participates in a plant defense mechanism (Potential). Binds to and induces leakage in phospholipd membranes, particularly ones containing 1-palmitoyl-2-oleophosphatidylethanolamine (POPE). In vitro, displays cytotoxicity against cultured cells but no hemolytic activity towards fresh erythrocytes. Not active against Gram-negative bacterium E.coli ATCC 25922 or Gram-positive bacterium S.aureus ATCC 25923 up to a concentration of 64 uM. The protein is Cyclotide mela-2 of Melicytus latifolius (Norfolk Island mahoe).